An 890-amino-acid chain; its full sequence is Translation initiation factor IF-2 (890 aa).

Residues 45 to 303 (LIDHLNQKNS…SLQQGFQKPA (259 aa)) are disordered. Polar residues predominate over residues 67–81 (STLNIPGTGGKSKSV). The span at 92-217 (VKRDPQEAER…RMAEENKWTD (126 aa)) shows a compositional bias: basic and acidic residues. Residues 252–266 (GRGRNAKAARPKKGN) show a composition bias toward basic residues. The segment covering 267 to 280 (KHAESKADREEARA) has biased composition (basic and acidic residues). One can recognise a tr-type G domain in the interval 389 to 558 (PRAPVVTIMG…LLQAEVLELK (170 aa)). Residues 398-405 (GHVDHGKT) are G1. 398 to 405 (GHVDHGKT) contributes to the GTP binding site. A G2 region spans residues 423-427 (GITQH). Positions 444 to 447 (DTPG) are G3. GTP is bound by residues 444–448 (DTPGH) and 498–501 (NKID). Residues 498 to 501 (NKID) are G4. Positions 534-536 (SAK) are G5. At lysine 808 the chain carries N6-acetyllysine.

This sequence belongs to the TRAFAC class translation factor GTPase superfamily. Classic translation factor GTPase family. IF-2 subfamily.

It localises to the cytoplasm. One of the essential components for the initiation of protein synthesis. Protects formylmethionyl-tRNA from spontaneous hydrolysis and promotes its binding to the 30S ribosomal subunits. Also involved in the hydrolysis of GTP during the formation of the 70S ribosomal complex. The polypeptide is Translation initiation factor IF-2 (Shigella boydii serotype 18 (strain CDC 3083-94 / BS512)).